Here is a 331-residue protein sequence, read N- to C-terminus: Large ribosomal subunit protein uL3 (331 aa).

Belongs to the universal ribosomal protein uL3 family. As to quaternary structure, part of the 50S ribosomal subunit. Forms a cluster with proteins L14 and L24e.

Functionally, one of the primary rRNA binding proteins, it binds directly near the 3'-end of the 23S rRNA, where it nucleates assembly of the 50S subunit. The sequence is that of Large ribosomal subunit protein uL3 from Thermoplasma volcanium (strain ATCC 51530 / DSM 4299 / JCM 9571 / NBRC 15438 / GSS1).